A 449-amino-acid chain; its full sequence is Probable aminotransferase TAT1 (449 aa).

The span at 1–12 (MNHNSNLVLPSH) shows a compositional bias: polar residues. A disordered region spans residues 1-20 (MNHNSNLVLPSHQTETQTQD).

It belongs to the class-I pyridoxal-phosphate-dependent aminotransferase family. Requires pyridoxal 5'-phosphate as cofactor.

This chain is Probable aminotransferase TAT1, found in Arabidopsis thaliana (Mouse-ear cress).